The primary structure comprises 130 residues: Small ribosomal subunit protein uS11c (130 aa).

The protein belongs to the universal ribosomal protein uS11 family. In terms of assembly, part of the 30S ribosomal subunit.

It localises to the plastid. It is found in the chloroplast. This is Small ribosomal subunit protein uS11c from Chlorokybus atmophyticus (Soil alga).